A 414-amino-acid chain; its full sequence is 26S proteasome regulatory subunit 6B homolog (414 aa).

Positions 1–33 (MAATMVLDPKPSSTPPPTLPNPYTTDSQSTDSE) are disordered. Over residues 21 to 30 (NPYTTDSQST) the composition is skewed to low complexity. Positions 55–81 (EYVKDELKNLKREQLRSQEEVKRIQSV) form a coiled coil. Position 202–209 (202–209 (GPPGTGKT)) interacts with ATP.

The protein belongs to the AAA ATPase family.

It is found in the cytoplasm. The protein resides in the nucleus. Its function is as follows. The 26S proteasome is involved in the ATP-dependent degradation of ubiquitinated proteins. The regulatory (or ATPase) complex confers ATP dependency and substrate specificity to the 26S complex. The sequence is that of 26S proteasome regulatory subunit 6B homolog from Helianthus annuus (Common sunflower).